The sequence spans 43 residues: Neurotrophin-4 (43 aa).

The protein belongs to the NGF-beta family.

NT-4 could play a role in oogenesis and/or early embryogenesis. NT-4 interacts with the low affinity NGF receptor and elicits neurite outgrowth from explanted dorsal root ganglia with no and lower activity in sympathetic and nodose ganglia, respectively. The polypeptide is Neurotrophin-4 (NTF4) (Macrovipera lebetinus (Levantine viper)).